The primary structure comprises 899 residues: Valine--tRNA ligase (899 aa).

The short motif at 60–70 (PNVTGVLHMGH) is the 'HIGH' region element. A 'KMSKS' region motif is present at residues 539 to 543 (KMSKS). Lys-542 contributes to the ATP binding site. Residues 827 to 898 (AGLIDLDEEQ…KQGLEKLAAL (72 aa)) are a coiled coil.

It belongs to the class-I aminoacyl-tRNA synthetase family. ValS type 1 subfamily. In terms of assembly, monomer.

Its subcellular location is the cytoplasm. It carries out the reaction tRNA(Val) + L-valine + ATP = L-valyl-tRNA(Val) + AMP + diphosphate. Functionally, catalyzes the attachment of valine to tRNA(Val). As ValRS can inadvertently accommodate and process structurally similar amino acids such as threonine, to avoid such errors, it has a 'posttransfer' editing activity that hydrolyzes mischarged Thr-tRNA(Val) in a tRNA-dependent manner. This chain is Valine--tRNA ligase, found in Syntrophotalea carbinolica (strain DSM 2380 / NBRC 103641 / GraBd1) (Pelobacter carbinolicus).